Consider the following 140-residue polypeptide: Nucleoside diphosphate kinase (140 aa).

ATP contacts are provided by K11, F59, R87, T93, R104, and N114. Residue H117 is the Pros-phosphohistidine intermediate of the active site.

This sequence belongs to the NDK family. As to quaternary structure, homotetramer. Mg(2+) is required as a cofactor.

The protein localises to the cytoplasm. It catalyses the reaction a 2'-deoxyribonucleoside 5'-diphosphate + ATP = a 2'-deoxyribonucleoside 5'-triphosphate + ADP. The catalysed reaction is a ribonucleoside 5'-diphosphate + ATP = a ribonucleoside 5'-triphosphate + ADP. Functionally, major role in the synthesis of nucleoside triphosphates other than ATP. The ATP gamma phosphate is transferred to the NDP beta phosphate via a ping-pong mechanism, using a phosphorylated active-site intermediate. In Bartonella tribocorum (strain CIP 105476 / IBS 506), this protein is Nucleoside diphosphate kinase.